Reading from the N-terminus, the 334-residue chain is ADP-L-glycero-D-manno-heptose-6-epimerase (334 aa).

NADP(+)-binding positions include 11–12 (FI), 32–33 (DN), Lys39, Lys54, 77–81 (QGACS), and Asn94. Tyr141 functions as the Proton acceptor in the catalytic mechanism. Lys145 contributes to the NADP(+) binding site. Asn171 serves as a coordination point for substrate. 2 residues coordinate NADP(+): Val172 and Lys180. Catalysis depends on Lys180, which acts as the Proton acceptor. Substrate contacts are provided by residues Arg182, His189, 203-206 (FGSN), Arg216, and Tyr295.

It belongs to the NAD(P)-dependent epimerase/dehydratase family. HldD subfamily. Homopentamer. NADP(+) serves as cofactor.

The catalysed reaction is ADP-D-glycero-beta-D-manno-heptose = ADP-L-glycero-beta-D-manno-heptose. Its pathway is nucleotide-sugar biosynthesis; ADP-L-glycero-beta-D-manno-heptose biosynthesis; ADP-L-glycero-beta-D-manno-heptose from D-glycero-beta-D-manno-heptose 7-phosphate: step 4/4. Functionally, catalyzes the interconversion between ADP-D-glycero-beta-D-manno-heptose and ADP-L-glycero-beta-D-manno-heptose via an epimerization at carbon 6 of the heptose. This chain is ADP-L-glycero-D-manno-heptose-6-epimerase, found in Neisseria meningitidis serogroup C / serotype 2a (strain ATCC 700532 / DSM 15464 / FAM18).